Here is a 339-residue protein sequence, read N- to C-terminus: MIRVAINGYGRIGRSILRALYESGKRQQIQIVAINELAKPEAICHLTQYDTTHGRFKHTVKLNGDQLLIGDDSILLLNQPDANLLPWAELDIDIVYEATGSLIDRQACEAHIHAGAKQVLISHPSSADVDETIVYGVNHDLLRAEHTVISNASCTTNCIVPVIDVLDKHFEVKSGAITTIHSAMNDQQVIDAYHDDLRRTRAAGQSIIPVDTKLARGIERILPHMKDKFEAISVRVPTINVTAIDLSVTLEKKVNIEQINSVLQRASNGSFNGILGYTDEPLVSCDFNHDPRSSIVDGTQTRVSAGHLVKLLLWCDNEWGFANRMLDTSLAMIQAKLDR.

11–12 (RI) contributes to the NAD(+) binding site. Substrate contacts are provided by residues 153–155 (SCT), Arg-199, 212–213 (TK), and Arg-235. Cys-154 (nucleophile) is an active-site residue. An NAD(+)-binding site is contributed by Asn-317.

Belongs to the glyceraldehyde-3-phosphate dehydrogenase family. Epd subfamily. In terms of assembly, homotetramer.

It localises to the cytoplasm. The enzyme catalyses D-erythrose 4-phosphate + NAD(+) + H2O = 4-phospho-D-erythronate + NADH + 2 H(+). Its pathway is cofactor biosynthesis; pyridoxine 5'-phosphate biosynthesis; pyridoxine 5'-phosphate from D-erythrose 4-phosphate: step 1/5. Functionally, catalyzes the NAD-dependent conversion of D-erythrose 4-phosphate to 4-phosphoerythronate. In Shewanella frigidimarina (strain NCIMB 400), this protein is D-erythrose-4-phosphate dehydrogenase.